A 322-amino-acid polypeptide reads, in one-letter code: Ferredoxin--NADP reductase (322 aa).

FAD is bound by residues Asp34, Gln42, Tyr47, Val87, Phe120, Asp279, and Thr320.

Belongs to the ferredoxin--NADP reductase type 2 family. In terms of assembly, homodimer. The cofactor is FAD.

It carries out the reaction 2 reduced [2Fe-2S]-[ferredoxin] + NADP(+) + H(+) = 2 oxidized [2Fe-2S]-[ferredoxin] + NADPH. The sequence is that of Ferredoxin--NADP reductase from Streptococcus pneumoniae (strain Hungary19A-6).